The primary structure comprises 276 residues: Large ribosomal subunit protein uL2c (276 aa).

The disordered stretch occupies residues 225-256; the sequence is NPVDHPHGGGEGRSPIGRPKPVSPWGKTALGA.

This sequence belongs to the universal ribosomal protein uL2 family. Part of the 50S ribosomal subunit.

The protein resides in the plastid. It localises to the chloroplast. This Mesostigma viride (Green alga) protein is Large ribosomal subunit protein uL2c (rpl2).